The sequence spans 191 residues: 3-isopropylmalate dehydratase small subunit (191 aa).

This sequence belongs to the LeuD family. LeuD type 1 subfamily. In terms of assembly, heterodimer of LeuC and LeuD.

The enzyme catalyses (2R,3S)-3-isopropylmalate = (2S)-2-isopropylmalate. The protein operates within amino-acid biosynthesis; L-leucine biosynthesis; L-leucine from 3-methyl-2-oxobutanoate: step 2/4. Its function is as follows. Catalyzes the isomerization between 2-isopropylmalate and 3-isopropylmalate, via the formation of 2-isopropylmaleate. This chain is 3-isopropylmalate dehydratase small subunit, found in Anaeromyxobacter dehalogenans (strain 2CP-1 / ATCC BAA-258).